We begin with the raw amino-acid sequence, 650 residues long: uncharacterized protein (650 aa).

This sequence belongs to the MG032/MG096/MG288 family.

This is an uncharacterized protein from Mycoplasma genitalium (strain ATCC 33530 / DSM 19775 / NCTC 10195 / G37) (Mycoplasmoides genitalium).